A 993-amino-acid chain; its full sequence is UPF0182 protein MAP_3291c (993 aa).

A run of 7 helical transmembrane segments spans residues 18-38 (ILILIALGVIALLLAGPRLID), 63-83 (FVVFLIAGLLVGGIVFAGLAV), 113-133 (LVSVGVPVAIGLLAGIIAQSY), 175-195 (FVAVFLAFVANLLAHYIFGGI), 210-230 (IQLVTLVGLLVLLKAVAYWLD), 254-274 (AVLPAKLILMAIALICAAAVF), and 287-307 (IGLVLLLLSSLIVGAGWPLIV). Residues 903–941 (NIQPTEGGAPAASPPANAPAPAVTPGSAPPVAAPPVPDG) are disordered. A compositionally biased stretch (pro residues) spans 929–939 (SAPPVAAPPVP).

Belongs to the UPF0182 family.

The protein localises to the cell membrane. The chain is UPF0182 protein MAP_3291c from Mycolicibacterium paratuberculosis (strain ATCC BAA-968 / K-10) (Mycobacterium paratuberculosis).